An 802-amino-acid polypeptide reads, in one-letter code: Receptor-type tyrosine-protein phosphatase alpha (802 aa).

Positions 1-19 (MDSWFILVLLGSGLICVSA) are cleaved as a signal peptide. Residues 20-151 (NNATTVAPSV…DSKDRRDETP (132 aa)) are Extracellular-facing. 2 N-linked (GlcNAc...) asparagine glycosylation sites follow: Asn21 and Asn36. The segment at 39–59 (TAEPVKEEAKTSNPTSSLTSL) is disordered. Residues Asn68, Asn80, Asn86, Asn104, and Asn124 are each glycosylated (N-linked (GlcNAc...) asparagine). Polar residues-rich tracts occupy residues 79–115 (VNSSDSDNGTTRTASTNSIGITISPNGTWLPDNQFTD) and 123–141 (GNSSTAATTPETFPPSGNS). A disordered region spans residues 79 to 146 (VNSSDSDNGT…PSGNSDSKDR (68 aa)). A helical membrane pass occupies residues 152 to 174 (IIAVMVALSSLLVIVFIIIVLYM). At 175 to 802 (LRFKKYKQAG…DAFSDYANFK (628 aa)) the chain is on the cytoplasmic side. A phosphoserine mark is found at Ser211 and Ser213. Tyrosine-protein phosphatase domains are found at residues 241–501 (FREE…LLEH) and 533–791 (LEEE…VQEY). Substrate contacts are provided by residues Asp410, 442-448 (CSAGVGR), and Gln486. The active-site Phosphocysteine intermediate is Cys442. The Phosphocysteine intermediate role is filled by Cys732. Tyr798 bears the Phosphotyrosine mark.

The protein belongs to the protein-tyrosine phosphatase family. Receptor class 4 subfamily. Part of a complex comprised of PTPRA, BCAR1, BCAR3 (via SH2 domain), and SRC. Within the complex, interacts (when phosphorylated on Tyr-798) with BCAR3 (via SH2 domain). Interacts with GRB2. Post-translationally, integrin binding to extracellular matrix induces phosphorylation at Tyr-798 which induces PTPRA localization and recruitment of BCAR3, BCAR1 and CRK to focal adhesions.

It is found in the cell membrane. Its subcellular location is the cell junction. The protein resides in the focal adhesion. The catalysed reaction is O-phospho-L-tyrosyl-[protein] + H2O = L-tyrosyl-[protein] + phosphate. Functionally, tyrosine protein phosphatase which is involved in integrin-mediated focal adhesion formation. Following integrin engagement, specifically recruits BCAR3, BCAR1 and CRK to focal adhesions thereby promoting SRC-mediated phosphorylation of BRAC1 and the subsequent activation of PAK and small GTPase RAC1 and CDC42. This Homo sapiens (Human) protein is Receptor-type tyrosine-protein phosphatase alpha (PTPRA).